The primary structure comprises 461 residues: Cysteine--tRNA ligase (461 aa).

C30 is a binding site for Zn(2+). The 'HIGH' region signature appears at 32–42; sequence VTVYDLCHIGH. Zn(2+) is bound by residues C211, H236, and E240. A 'KMSKS' region motif is present at residues 268 to 272; that stretch reads KMSKS. ATP is bound at residue K271.

Belongs to the class-I aminoacyl-tRNA synthetase family. Monomer. The cofactor is Zn(2+).

It localises to the cytoplasm. The catalysed reaction is tRNA(Cys) + L-cysteine + ATP = L-cysteinyl-tRNA(Cys) + AMP + diphosphate. In Shewanella sp. (strain ANA-3), this protein is Cysteine--tRNA ligase.